The primary structure comprises 368 residues: tRNA-cytidine(32) 2-sulfurtransferase (368 aa).

The short motif at Ser95–Ser100 is the PP-loop motif element. [4Fe-4S] cluster contacts are provided by Cys170, Cys173, and Cys261.

This sequence belongs to the TtcA family. Homodimer. Requires Mg(2+) as cofactor. [4Fe-4S] cluster is required as a cofactor.

Its subcellular location is the cytoplasm. It catalyses the reaction cytidine(32) in tRNA + S-sulfanyl-L-cysteinyl-[cysteine desulfurase] + AH2 + ATP = 2-thiocytidine(32) in tRNA + L-cysteinyl-[cysteine desulfurase] + A + AMP + diphosphate + H(+). It functions in the pathway tRNA modification. Catalyzes the ATP-dependent 2-thiolation of cytidine in position 32 of tRNA, to form 2-thiocytidine (s(2)C32). The sulfur atoms are provided by the cysteine/cysteine desulfurase (IscS) system. The chain is tRNA-cytidine(32) 2-sulfurtransferase from Psychrobacter sp. (strain PRwf-1).